We begin with the raw amino-acid sequence, 291 residues long: UPF0173 metal-dependent hydrolase Rmet_5695 (291 aa).

The protein belongs to the UPF0173 family.

This chain is UPF0173 metal-dependent hydrolase Rmet_5695, found in Cupriavidus metallidurans (strain ATCC 43123 / DSM 2839 / NBRC 102507 / CH34) (Ralstonia metallidurans).